Reading from the N-terminus, the 182-residue chain is Endoribonuclease YbeY (182 aa).

Zn(2+) contacts are provided by H115, H119, and H125.

Belongs to the endoribonuclease YbeY family. Zn(2+) is required as a cofactor.

It is found in the cytoplasm. Functionally, single strand-specific metallo-endoribonuclease involved in late-stage 70S ribosome quality control and in maturation of the 3' terminus of the 16S rRNA. This is Endoribonuclease YbeY from Bifidobacterium longum (strain NCC 2705).